A 193-amino-acid polypeptide reads, in one-letter code: Hypoxanthine/guanine phosphoribosyltransferase (193 aa).

This sequence belongs to the purine/pyrimidine phosphoribosyltransferase family. Archaeal HPRT subfamily. As to quaternary structure, homodimer.

It localises to the cytoplasm. It carries out the reaction IMP + diphosphate = hypoxanthine + 5-phospho-alpha-D-ribose 1-diphosphate. The catalysed reaction is GMP + diphosphate = guanine + 5-phospho-alpha-D-ribose 1-diphosphate. It participates in purine metabolism; IMP biosynthesis via salvage pathway; IMP from hypoxanthine: step 1/1. Functionally, catalyzes a salvage reaction resulting in the formation of IMP that is energically less costly than de novo synthesis. Prefers hypoxanthine, has 66% activity with guanine while activity with adenine, xanthine, uracil, orotate, or cytosine is negligible. In Methanothermobacter marburgensis (strain ATCC BAA-927 / DSM 2133 / JCM 14651 / NBRC 100331 / OCM 82 / Marburg) (Methanobacterium thermoautotrophicum), this protein is Hypoxanthine/guanine phosphoribosyltransferase.